A 1186-amino-acid polypeptide reads, in one-letter code: Partner and localizer of BRCA2 (1186 aa).

The segment at 1-160 is required for its oligomerization and is important for its focal concentration at DNA damage sites; that stretch reads MDEPPGKPLS…QKRTFISQER (160 aa). The interval 1 to 200 is interaction with RAD51; that stretch reads MDEPPGKPLS…PVTEIRTHLL (200 aa). The interaction with BRCA1 stretch occupies residues 1-319; sequence MDEPPGKPLS…SKSGQLPTSS (319 aa). Positions 1–579 are DNA-binding (with the preference D loop &gt; dsDNA &gt; ssDNA); that stretch reads MDEPPGKPLS…EDSLSWSNSA (579 aa). The stretch at 9 to 41 forms a coiled coil; sequence LSCEEKEKLKEKLAFLKREYSKTLARLQRAQRA. Disordered regions lie at residues 52–72 and 95–157; these read VEEQDCLSQQDLSPQLKHSEP and KTSI…TFIS. Positions 120 to 141 are enriched in basic and acidic residues; it reads RTDDTQEHFPHRVSDPSGEQKQ. Basic residues predominate over residues 143–152; sequence LPSRRKKQQK. Phosphoserine occurs at positions 172 and 190. A disordered region spans residues 252–273; the sequence is TLSDSGSSQHLEHIPPKGSSEL. A Phosphoserine modification is found at Ser-285. Residues 346–365 are disordered; that stretch reads KEQNQTEKSLKSPSDTLDGR. Phosphoserine is present on residues Ser-376 and Ser-387. Residues 395-446 form a chAM (Chromatin-association motif); required for chromatin association, mediates nucleosome association region; that stretch reads SCTVPEGLLFPAEYYVRTTRSMSNCQRKVAVEAVIQSHLDVKKKGFKNKNKD. Residues 440-525 are disordered; that stretch reads FKNKNKDASK…RKSACTPASD (86 aa). At Ser-454 the chain carries Phosphoserine. Polar residues predominate over residues 467 to 488; the sequence is GTCTGQPSSRTSQKLLSLTKVS. Ser-660 carries the post-translational modification Phosphoserine. Disordered stretches follow at residues 679–698 and 774–798; these read PGKSHPKRPNSQSQHTKTGL and KQFDSSGSPAKPHTTLQVSGRQGQP. The span at 687–698 shows a compositional bias: polar residues; the sequence is PNSQSQHTKTGL. The segment at 775-1186 is required for interaction with POLH and POLH DNA synthesis stimulation; it reads QFDSSGSPAK…DGNIFVYHYS (412 aa). Ser-781 is modified (phosphoserine). Residues 853 to 1186 are interaction with RAD51, BRCA2 and POLH; sequence GNLQLVSELK…DGNIFVYHYS (334 aa). 7 WD repeats span residues 854–915, 917–961, 962–1009, 1010–1052, 1058–1109, 1115–1153, and 1155–1186; these read NLQL…WHFA, VPVL…QVLL, KSGN…LMPP, EETI…MHID, SVCH…MLYC, AGRFLEGDVKDHCAAAILTSGTIAIWDLLLGQCTALLPP, and SDQHWSFVKWSGTDSHLLAGQKDGNIFVYHYS.

Homooligomer; dissociated upon DNA damage thus allowing association with BRCA1. Oligomerization is essential for its focal accumulation at DNA breaks. Part of a BRCA complex containing BRCA1, BRCA2 and PALB2. Interacts with BRCA1 and this interaction is essential for its function in HRR. Interacts with RAD51AP1 and MORF4L1/MRG15. Component of the homologous recombination repair (HR) complex composed of ERCC5/XPG, BRCA2, PALB2, DSS1 and RAD51. Within the complex, interacts with ERCC5/XPG and BRCA2. Interacts with BRCA2, RAD51C, RAD51 and XRCC3; the interactions are direct and it may serve as a scaffold for a HR complex containing PALB2, BRCA2, RAD51C, RAD51 and XRCC3. Interacts with POLH; the interaction is direct.

It localises to the nucleus. Functionally, plays a critical role in homologous recombination repair (HRR) through its ability to recruit BRCA2 and RAD51 to DNA breaks. Strongly stimulates the DNA strand-invasion activity of RAD51, stabilizes the nucleoprotein filament against a disruptive BRC3-BRC4 polypeptide and helps RAD51 to overcome the suppressive effect of replication protein A (RPA). Functionally cooperates with RAD51AP1 in promoting of D-loop formation by RAD51. Serves as the molecular scaffold in the formation of the BRCA1-PALB2-BRCA2 complex which is essential for homologous recombination. Via its WD repeats is proposed to scaffold a HR complex containing RAD51C and BRCA2 which is thought to play a role in HR-mediated DNA repair. Essential partner of BRCA2 that promotes the localization and stability of BRCA2. Also enables its recombinational repair and checkpoint functions of BRCA2. May act by promoting stable association of BRCA2 with nuclear structures, allowing BRCA2 to escape the effects of proteasome-mediated degradation. Binds DNA with high affinity for D loop, which comprises single-stranded, double-stranded and branched DNA structures. May play a role in the extension step after strand invasion at replication-dependent DNA double-strand breaks; together with BRCA2 is involved in both POLH localization at collapsed replication forks and DNA polymerization activity. This chain is Partner and localizer of BRCA2 (PALB2), found in Homo sapiens (Human).